Here is a 576-residue protein sequence, read N- to C-terminus: Nuclear/nucleolar GTPase 2 (576 aa).

Disordered stretches follow at residues 1-61 (MVKK…SNEY) and 166-186 (QDAF…EEED). The span at 16-34 (HSLDANRADGKKKTTETRS) shows a compositional bias: basic and acidic residues. Residues 42-52 (KMYKTRPKRNA) show a composition bias toward basic residues. One can recognise a CP-type G domain in the interval 206-367 (WGELYKVIDS…LIDCPGVVYQ (162 aa)). The DARXP motif signature appears at 224–228 (DARDP). The interval 254-257 (NKCD) is G4. 254–257 (NKCD) lines the GTP pocket. The segment at 283-285 (SVN) is G5. The segment at 316-323 (GYPNVGKS) is G1. 319–324 (NVGKSS) serves as a coordination point for GTP. Positions 342–346 (GETKV) are G2. The segment at 360-363 (DCPG) is G3. G363 is a binding site for GTP. Positions 502–576 (TQQQKDVPVQ…DEEDESDSAE (75 aa)) are disordered. A compositionally biased stretch (basic and acidic residues) spans 509-530 (PVQRDFYDEKDLKDDKKAKEST). Acidic residues predominate over residues 531 to 576 (ETDAENGTDAEEDEDAVSEDGVESDSDADEDAVSENDEEDESDSAE).

The protein belongs to the TRAFAC class YlqF/YawG GTPase family. RsgA subfamily. As to quaternary structure, interacts with the 60S ribosomal proteins RPL10AA, RPL10AB and RPL10AC. Ubiquitous, with higher levels in meristematic regions.

It localises to the nucleus. The protein localises to the nucleolus. The GTPase activity is stimulated in the presence of the 60S ribosomal subunit. In terms of biological role, GTPase involved in pre-60S ribosomal subunit maturation. In Arabidopsis thaliana (Mouse-ear cress), this protein is Nuclear/nucleolar GTPase 2.